Reading from the N-terminus, the 823-residue chain is Aminopeptidase O (823 aa).

H481 is a binding site for Zn(2+). The Proton acceptor role is filled by E482. Zn(2+)-binding residues include H485 and E504. A Nucleolar localization signal motif is present at residues 693–703 (RRPRKRKRGKR).

Belongs to the peptidase M1 family. The cofactor is Zn(2+). As to expression, expressed in testis, heart, brain, lung, liver, skeletal muscle, kidney and ovary. Expressed in vascular tissues.

The protein localises to the nucleus. The protein resides in the nucleolus. Its subcellular location is the cytoplasm. In terms of biological role, aminopeptidase which catalyzes the hydrolysis of amino acid residues from the N-terminus of peptide or protein substrates. This is Aminopeptidase O (Aopep) from Mus musculus (Mouse).